The primary structure comprises 868 residues: V-set and immunoglobulin domain-containing protein 10-like (868 aa).

A signal peptide spans Met-1–Gly-27. The segment covering Leu-26–Ser-52 has biased composition (low complexity). The interval Leu-26–Pro-82 is disordered. The Extracellular portion of the chain corresponds to Ser-28–Ala-763. Asn-48, Asn-77, and Asn-88 each carry an N-linked (GlcNAc...) asparagine glycan. Over residues Arg-71–His-80 the composition is skewed to polar residues. Disordered stretches follow at residues Leu-96 to Lys-154 and Trp-323 to Arg-342. Polar residues-rich tracts occupy residues Asp-99 to Ser-108 and Pro-133 to Asp-143. 2 consecutive Ig-like C2-type domains span residues Pro-289 to Ser-381 and Pro-389 to Asn-474. Cysteines 311 and 365 form a disulfide. An N-linked (GlcNAc...) asparagine glycan is attached at Asn-410. Cys-415 and Cys-458 are disulfide-bonded. Asn-474, Asn-628, and Asn-637 each carry an N-linked (GlcNAc...) asparagine glycan. The helical transmembrane segment at Ile-764–Leu-784 threads the bilayer. The Cytoplasmic segment spans residues Cys-785 to Val-868.

Its subcellular location is the membrane. This is V-set and immunoglobulin domain-containing protein 10-like (Vsig10l) from Mus musculus (Mouse).